Consider the following 517-residue polypeptide: Beta-glucosidase 1 (517 aa).

Positions 1–22 are cleaved as a signal peptide; it reads MEDVLTLITMIVLLLLAFHGFG. A beta-D-glucoside-binding positions include Gln48, His145, and 190–191; that span reads NE. Glu191 acts as the Proton donor in catalysis. Cys210 and Cys217 form a disulfide bridge. Residues Asn216 and Asn221 are each glycosylated (N-linked (GlcNAc...) asparagine). Tyr333 and Glu406 together coordinate a beta-D-glucoside. The active-site Nucleophile is the Glu406. N-linked (GlcNAc...) asparagine glycosylation occurs at Asn441. Trp451 and Phe467 together coordinate a beta-D-glucoside. N-linked (GlcNAc...) asparagine glycans are attached at residues Asn473 and Asn512.

Belongs to the glycosyl hydrolase 1 family.

The catalysed reaction is Hydrolysis of terminal, non-reducing beta-D-glucosyl residues with release of beta-D-glucose.. This is Beta-glucosidase 1 from Arabidopsis thaliana (Mouse-ear cress).